A 217-amino-acid polypeptide reads, in one-letter code: Large ribosomal subunit protein uL1 (217 aa).

Position 2 is an N-acetylserine (Ser2). At Tyr11 the chain carries Phosphotyrosine. 2 positions are modified to N6-acetyllysine: Lys91 and Lys106. Lys118 is modified (N6-acetyllysine; alternate). A Glycyl lysine isopeptide (Lys-Gly) (interchain with G-Cter in SUMO1); alternate cross-link involves residue Lys118. Lys118 is covalently cross-linked (Glycyl lysine isopeptide (Lys-Gly) (interchain with G-Cter in SUMO2); alternate). Residue Lys161 forms a Glycyl lysine isopeptide (Lys-Gly) (interchain with G-Cter in SUMO2) linkage.

The protein belongs to the universal ribosomal protein uL1 family. In terms of assembly, component of the large ribosomal subunit.

The protein resides in the cytoplasm. In terms of biological role, component of the large ribosomal subunit. The ribosome is a large ribonucleoprotein complex responsible for the synthesis of proteins in the cell. The chain is Large ribosomal subunit protein uL1 (Rpl10a) from Mus musculus (Mouse).